The primary structure comprises 343 residues: Anthranilate phosphoribosyltransferase (343 aa).

Residues Gly-84, 87–88 (GD), Thr-92, 94–97 (NIST), 112–120 (KHGNRGVSS), and Ser-124 each bind 5-phospho-alpha-D-ribose 1-diphosphate. Residue Gly-84 coordinates anthranilate. Ser-96 lines the Mg(2+) pocket. Asn-115 serves as a coordination point for anthranilate. Residue Arg-170 participates in anthranilate binding. Asp-229 and Glu-230 together coordinate Mg(2+).

Belongs to the anthranilate phosphoribosyltransferase family. Homodimer. Mg(2+) is required as a cofactor.

The enzyme catalyses N-(5-phospho-beta-D-ribosyl)anthranilate + diphosphate = 5-phospho-alpha-D-ribose 1-diphosphate + anthranilate. It participates in amino-acid biosynthesis; L-tryptophan biosynthesis; L-tryptophan from chorismate: step 2/5. Catalyzes the transfer of the phosphoribosyl group of 5-phosphorylribose-1-pyrophosphate (PRPP) to anthranilate to yield N-(5'-phosphoribosyl)-anthranilate (PRA). The protein is Anthranilate phosphoribosyltransferase of Burkholderia orbicola (strain MC0-3).